The sequence spans 281 residues: N-acetylmuramic acid 6-phosphate etherase (281 aa).

The SIS domain maps to 63 to 226; the sequence is IVPRMKQGGR…TTSVMIQLGR (164 aa). Glu91 serves as the catalytic Proton donor. Residue Glu122 is part of the active site.

Belongs to the GCKR-like family. MurNAc-6-P etherase subfamily. As to quaternary structure, homodimer.

The catalysed reaction is N-acetyl-D-muramate 6-phosphate + H2O = N-acetyl-D-glucosamine 6-phosphate + (R)-lactate. It functions in the pathway amino-sugar metabolism; N-acetylmuramate degradation. Its function is as follows. Specifically catalyzes the cleavage of the D-lactyl ether substituent of MurNAc 6-phosphate, producing GlcNAc 6-phosphate and D-lactate. The polypeptide is N-acetylmuramic acid 6-phosphate etherase (Bacteroides fragilis (strain YCH46)).